Consider the following 286-residue polypeptide: Transmembrane protein 156 (286 aa).

The Cytoplasmic segment spans residues 1–4; that stretch reads MTET. The helical transmembrane segment at 5–25 threads the bilayer; the sequence is AFLKLFVAIVITFILVLPEFF. The Extracellular segment spans residues 26–214; the sequence is KTPKERTLEL…KSVTCSMKIT (189 aa). Residues N45, N54, N76, and N142 are each glycosylated (N-linked (GlcNAc...) asparagine). Residues 215 to 235 form a helical membrane-spanning segment; that stretch reads WYVLVLFVFMLGIIFIIYKIL. Residues 236 to 286 lie on the Cytoplasmic side of the membrane; sequence EEHRRVWRRQSHNYKSSSVLFRGHDSGKLSTLNVRVIPGYPWTIWTRDFDE.

The protein localises to the membrane. This chain is Transmembrane protein 156 (Tmem156), found in Rattus norvegicus (Rat).